The following is a 195-amino-acid chain: ATP-dependent Clp protease proteolytic subunit (195 aa).

Ser99 (nucleophile) is an active-site residue. His124 is an active-site residue.

This sequence belongs to the peptidase S14 family. As to quaternary structure, fourteen ClpP subunits assemble into 2 heptameric rings which stack back to back to give a disk-like structure with a central cavity, resembling the structure of eukaryotic proteasomes.

It localises to the cytoplasm. The enzyme catalyses Hydrolysis of proteins to small peptides in the presence of ATP and magnesium. alpha-casein is the usual test substrate. In the absence of ATP, only oligopeptides shorter than five residues are hydrolyzed (such as succinyl-Leu-Tyr-|-NHMec, and Leu-Tyr-Leu-|-Tyr-Trp, in which cleavage of the -Tyr-|-Leu- and -Tyr-|-Trp bonds also occurs).. In terms of biological role, cleaves peptides in various proteins in a process that requires ATP hydrolysis. Has a chymotrypsin-like activity. Plays a major role in the degradation of misfolded proteins. This chain is ATP-dependent Clp protease proteolytic subunit, found in Desulforamulus reducens (strain ATCC BAA-1160 / DSM 100696 / MI-1) (Desulfotomaculum reducens).